Reading from the N-terminus, the 134-residue chain is Insulin-like peptide 4 (134 aa).

An N-terminal signal peptide occupies residues 1–26 (MSLIRLGLALLLLLATVSQLLQPVQG). Intrachain disulfides connect C31–C120, C43–C133, and C119–C124. Positions 54-108 (SSASKDARVRDLIRKLQQPDEDIEQETETGRLKQKHTDADTEKGVPPAVGSGRKL) are cleaved as a propeptide — connecting peptide. The disordered stretch occupies residues 72-107 (PDEDIEQETETGRLKQKHTDADTEKGVPPAVGSGRK). Residues 81 to 96 (ETGRLKQKHTDADTEK) show a composition bias toward basic and acidic residues.

It belongs to the insulin family. As to quaternary structure, heterodimer of a B chain and an A chain linked by two disulfide bonds. As to expression, expressed at a high level in the embryonic mesoderm, with expression continuing after gastrulation and reducing from stage 12 onwards. Highly expressed in the embryonic anterior midgut rudiment and larval midgut.

It localises to the secreted. Possible ligand of InR/insulin-like receptor. This is Insulin-like peptide 4 from Drosophila melanogaster (Fruit fly).